The sequence spans 286 residues: MDAHVAFSGFPTLPSVSPSGPQPPSLAGDEPGREPEEVVGGGDSEPPAAPGPGRRRRRPLQRGKPPYSYIALIAMALAHAPGRRLTLAAIYRFITERFAFYRDSPRKWQNSIRHNLTLNDCFVKVPREPGNPGKGNYWTLDPAAADMFDNGSFLRRRKRFKRTELPAPPPPPFPYAPFPPAPAPAPAPPARLFRLDSLLGLQTEPPGPLAPEPPCCAAPDASFPPCAAAASPPLYSPAPERLGLPAPLPAEPLLALAGSAGALGPLGAGEAYLRQPGFPPGLERYL.

A disordered region spans residues M1 to R62. The fork-head DNA-binding region spans K64–K158.

The protein localises to the nucleus. In terms of biological role, transcription factor that controls lens epithelial cell growth through regulation of proliferation, apoptosis and cell cycle. During lens development, controls the ratio of the lens fiber cells to the cells of the anterior lens epithelium by regulating the rate of proliferation and differentiation. Controls lens vesicle closure and subsequent separation of the lens vesicle from ectoderm. Controls the expression of DNAJB1 in a pathway that is crucial for the development of the anterior segment of the eye. The protein is Forkhead box protein E3 (Foxe3) of Rattus norvegicus (Rat).